We begin with the raw amino-acid sequence, 300 residues long: MKIKAKNIVKIYDQKLPSELKALDKVTTEINQGEFIAIIGQTGSGKTTFIQHMNALLLPDQGEVEYLYFDSKNQEKKLVVQKPRFFRKKLKFINEIRRRVGVVFQFAEYQLFEQTIEKDIIFGAVSMGTPKNEAKKIAAEIIELVGLDQSFLQKSPFELSGGQKRRVAIAGILAMDPDIIFFDEPTAGLDPQGTLKMLEILDTLYKKGKTIILATHDLDSVLEWTKRCIFFKDGRIIYDGDTYSILANNKFLIENKMLPTNLLNFREKLIKIGYPISNVRSVSELISEINMLIQKETNAD.

The ABC transporter domain occupies 3 to 258 (IKAKNIVKIY…NKFLIENKML (256 aa)). Residue 40-47 (GQTGSGKT) coordinates ATP.

Belongs to the ABC transporter superfamily. Energy-coupling factor EcfA family. As to quaternary structure, forms a stable energy-coupling factor (ECF) transporter complex composed of 2 membrane-embedded substrate-binding proteins (S component), 2 ATP-binding proteins (A component) and 2 transmembrane proteins (T component).

It is found in the cell membrane. ATP-binding (A) component of a common energy-coupling factor (ECF) ABC-transporter complex. Unlike classic ABC transporters this ECF transporter provides the energy necessary to transport a number of different substrates. This is Energy-coupling factor transporter ATP-binding protein EcfA2 from Mesomycoplasma hyopneumoniae (strain 7448) (Mycoplasma hyopneumoniae).